We begin with the raw amino-acid sequence, 503 residues long: AMP phosphorylase (503 aa).

AMP-binding positions include Gly168, 194-199 (SRAITS), and Thr203. Asp256 serves as the catalytic Proton donor. 2 residues coordinate AMP: Ser264 and Lys288.

The protein belongs to the thymidine/pyrimidine-nucleoside phosphorylase family. Type 2 subfamily.

The catalysed reaction is AMP + phosphate = alpha-D-ribose 1,5-bisphosphate + adenine. It catalyses the reaction CMP + phosphate = cytosine + alpha-D-ribose 1,5-bisphosphate. The enzyme catalyses UMP + phosphate = alpha-D-ribose 1,5-bisphosphate + uracil. In terms of biological role, catalyzes the conversion of AMP and phosphate to adenine and ribose 1,5-bisphosphate (R15P). Exhibits phosphorylase activity toward CMP and UMP in addition to AMP. Functions in an archaeal AMP degradation pathway, together with R15P isomerase and RubisCO. In Methanocaldococcus jannaschii (strain ATCC 43067 / DSM 2661 / JAL-1 / JCM 10045 / NBRC 100440) (Methanococcus jannaschii), this protein is AMP phosphorylase.